We begin with the raw amino-acid sequence, 116 residues long: Ribosome-binding factor A (116 aa).

The protein belongs to the RbfA family. In terms of assembly, monomer. Binds 30S ribosomal subunits, but not 50S ribosomal subunits or 70S ribosomes.

Its subcellular location is the cytoplasm. Functionally, one of several proteins that assist in the late maturation steps of the functional core of the 30S ribosomal subunit. Associates with free 30S ribosomal subunits (but not with 30S subunits that are part of 70S ribosomes or polysomes). Required for efficient processing of 16S rRNA. May interact with the 5'-terminal helix region of 16S rRNA. The polypeptide is Ribosome-binding factor A (Clostridium botulinum (strain Eklund 17B / Type B)).